Reading from the N-terminus, the 133-residue chain is Large ribosomal subunit protein eL32z (133 aa).

This sequence belongs to the eukaryotic ribosomal protein eL32 family.

The sequence is that of Large ribosomal subunit protein eL32z (RPL32A) from Arabidopsis thaliana (Mouse-ear cress).